Here is a 147-residue protein sequence, read N- to C-terminus: Mediator of RNA polymerase II transcription subunit 10 (147 aa).

This sequence belongs to the Mediator complex subunit 10 family. Component of the Mediator complex.

It is found in the nucleus. Component of the Mediator complex, a coactivator involved in the regulated transcription of nearly all RNA polymerase II-dependent genes. Mediator functions as a bridge to convey information from gene-specific regulatory proteins to the basal RNA polymerase II transcription machinery. Mediator is recruited to promoters by direct interactions with regulatory proteins and serves as a scaffold for the assembly of a functional preinitiation complex with RNA polymerase II and the general transcription factors. The protein is Mediator of RNA polymerase II transcription subunit 10 (NUT2) of Debaryomyces hansenii (strain ATCC 36239 / CBS 767 / BCRC 21394 / JCM 1990 / NBRC 0083 / IGC 2968) (Yeast).